A 74-amino-acid polypeptide reads, in one-letter code: Alpha-conotoxin GeXIVA (74 aa).

A signal peptide spans 1-22 (MKLTCVLIITVLFLTACQLTTA). Residues 23-46 (VTYSRGEHKHRALMSTGTNYRLPK) constitute a propeptide that is removed on maturation. Residues 56-64 (RSPYDRRRR) form an interacts with alpha-9-alpha-10 (CHRNA9-CHRNA10) nAChR region.

This sequence belongs to the conotoxin O1 superfamily. In terms of processing, the native disulfide bond pairing has not been studied. Three isomers may exist: the bead isomer (I-II; III-IV), the globular isomer (I-III; II-IV), the ribbon isomer (I-IV; II-III). They have all been synthesized and their activity tested. All of them show similar potency on alpha-9-alpha-10 (CHRNA9-CHRNA10) nAChR, showing that disulfide bonds does not significantly affect their activity. In addition, removal of disulfide bonds does not affect the activity on alpha-9-alpha-10 (CHRNA9-CHRNA10) nAChR either. Expressed by the venom duct.

The protein localises to the secreted. Functionally, alpha-conotoxins act on postsynaptic membranes, they bind to the nicotinic acetylcholine receptors (nAChR) and thus inhibit them. This toxin is very potent on alpha-9-alpha-10/CHRNA9-CHRNA10 nAChR (IC(50)=4.61-12 nM for the bead isomer (I-II; III-IV), IC(50)=7-16 nM for the ribbon isomer (I-IV; II-III) and IC(50)=22.7 nM for the globular isomer (I-III; II-IV)). The bead isomer also shows a weak inhibition on other nAChRs (alpha-1-beta-1-delta-epsilon/CHRNA1-CHRNB1-CHRND-CHRNE, alpha-7/CHRNA7, alpha-6/alpha-3-beta-2-beta-3 (CHRNA6/CHRNA3-CHRNB2-CHRNB3), alpha-3-beta-2/CHRNA3-CHRNB2, alpha-2-beta-2/CHRNA2-CHRNB2, alpha-6/alpha-3-beta-4 (CHRNA6/CHRNA3-CHRNB4), alpha-4-beta-2/CHRNA4-CHRNB2, alpha-4-beta-4/CHRNA4-CHRNB4, alpha-2-beta-4/CHRNA2-CHRNB4, alpha-3-beta-4/CHRNA3-CHRNB4). The toxin blockade is voltage-dependent, and its binding site does not overlap with the binding site of the competitive antagonist alpha-conotoxin RgIA. The toxin inhibits Sf9 cell growth. Both the bead and ribbon isomers relieve pain effects in the rat chronic constriction injury (CCI) model of neuropathic pain, and in the acute pain model of tail flick test, but have no effect on motor performance. This chain is Alpha-conotoxin GeXIVA, found in Conus generalis (General cone).